The primary structure comprises 340 residues: Glycerol-3-phosphate dehydrogenase [NAD(P)+] (340 aa).

Positions 13, 14, and 108 each coordinate NADPH. Sn-glycerol 3-phosphate is bound by residues K108, G137, and T139. A141 provides a ligand contact to NADPH. Positions 193, 246, 256, 257, and 258 each coordinate sn-glycerol 3-phosphate. Catalysis depends on K193, which acts as the Proton acceptor. Residue R257 coordinates NADPH. NADPH contacts are provided by I281 and E283.

The protein belongs to the NAD-dependent glycerol-3-phosphate dehydrogenase family.

It localises to the cytoplasm. It catalyses the reaction sn-glycerol 3-phosphate + NAD(+) = dihydroxyacetone phosphate + NADH + H(+). The catalysed reaction is sn-glycerol 3-phosphate + NADP(+) = dihydroxyacetone phosphate + NADPH + H(+). Its pathway is membrane lipid metabolism; glycerophospholipid metabolism. Its function is as follows. Catalyzes the reduction of the glycolytic intermediate dihydroxyacetone phosphate (DHAP) to sn-glycerol 3-phosphate (G3P), the key precursor for phospholipid synthesis. The sequence is that of Glycerol-3-phosphate dehydrogenase [NAD(P)+] from Bartonella henselae (strain ATCC 49882 / DSM 28221 / CCUG 30454 / Houston 1) (Rochalimaea henselae).